Consider the following 23-residue polypeptide: Potassium channel toxin kappa-KTx 1.3 (23 aa).

2 cysteine pairs are disulfide-bonded: C4–C22 and C8–C18.

Belongs to the short scorpion toxin superfamily. Potassium channel inhibitor kappa-KTx family. Kappa-KTx 1 subfamily. As to quaternary structure, monomer. Is not amidated. In terms of tissue distribution, expressed by the venom gland.

Its subcellular location is the secreted. Functionally, shows very weak blocking activity on voltage-gated potassium channels Kv10.1/KCNH1/EAG1 (6.2% inhibition by 40 uM of the toxin). Has no effect on the other voltage-gated potassium channels tested. In Heterometrus spinifer (Asia giant forest scorpion), this protein is Potassium channel toxin kappa-KTx 1.3.